A 362-amino-acid chain; its full sequence is Cytochrome c peroxidase, mitochondrial (362 aa).

Residues 1 to 40 constitute a mitochondrion transit peptide; it reads MASASRQILRAASRASTRTAFAPAASRGLAARTIAGRRFY. Catalysis depends on His-121, which acts as the Proton acceptor. His-244 contributes to the heme b binding site. Trp-260 acts as the Tryptophan radical intermediate in catalysis.

The protein belongs to the peroxidase family. Cytochrome c peroxidase subfamily. Forms a one-to-one complex with cytochrome c. Requires heme b as cofactor.

The protein localises to the mitochondrion matrix. The protein resides in the mitochondrion intermembrane space. It carries out the reaction 2 Fe(II)-[cytochrome c] + H2O2 + 2 H(+) = 2 Fe(III)-[cytochrome c] + 2 H2O. Its function is as follows. Destroys radicals which are normally produced within the cells and which are toxic to biological systems. The sequence is that of Cytochrome c peroxidase, mitochondrial (CCP1) from Pyricularia oryzae (strain 70-15 / ATCC MYA-4617 / FGSC 8958) (Rice blast fungus).